A 130-amino-acid chain; its full sequence is Small ribosomal subunit protein uS9 (130 aa).

Belongs to the universal ribosomal protein uS9 family.

This is Small ribosomal subunit protein uS9 from Hydrogenovibrio crunogenus (strain DSM 25203 / XCL-2) (Thiomicrospira crunogena).